The primary structure comprises 460 residues: Bifunctional protein GlmU (460 aa).

A pyrophosphorylase region spans residues 1–232 (MENVAAIILA…SDEIMGVNDR (232 aa)). Residues 9–12 (LAAG), K23, Q75, and 80–81 (GT) each bind UDP-N-acetyl-alpha-D-glucosamine. D105 lines the Mg(2+) pocket. Residues G142, E157, N172, and N230 each contribute to the UDP-N-acetyl-alpha-D-glucosamine site. Residue N230 participates in Mg(2+) binding. The segment at 233–253 (AQLAQAARILRRRINRDLMLS) is linker. Residues 254–460 (GVSLVDPEQT…GWRIRMKKKT (207 aa)) form an N-acetyltransferase region. UDP-N-acetyl-alpha-D-glucosamine contacts are provided by R336 and K354. The active-site Proton acceptor is the H366. Positions 369 and 380 each coordinate UDP-N-acetyl-alpha-D-glucosamine. Acetyl-CoA contacts are provided by residues 389–390 (NY), S408, A426, and R443.

The protein in the N-terminal section; belongs to the N-acetylglucosamine-1-phosphate uridyltransferase family. It in the C-terminal section; belongs to the transferase hexapeptide repeat family. In terms of assembly, homotrimer. It depends on Mg(2+) as a cofactor.

It is found in the cytoplasm. It carries out the reaction alpha-D-glucosamine 1-phosphate + acetyl-CoA = N-acetyl-alpha-D-glucosamine 1-phosphate + CoA + H(+). The catalysed reaction is N-acetyl-alpha-D-glucosamine 1-phosphate + UTP + H(+) = UDP-N-acetyl-alpha-D-glucosamine + diphosphate. Its pathway is nucleotide-sugar biosynthesis; UDP-N-acetyl-alpha-D-glucosamine biosynthesis; N-acetyl-alpha-D-glucosamine 1-phosphate from alpha-D-glucosamine 6-phosphate (route II): step 2/2. It functions in the pathway nucleotide-sugar biosynthesis; UDP-N-acetyl-alpha-D-glucosamine biosynthesis; UDP-N-acetyl-alpha-D-glucosamine from N-acetyl-alpha-D-glucosamine 1-phosphate: step 1/1. The protein operates within bacterial outer membrane biogenesis; LPS lipid A biosynthesis. Functionally, catalyzes the last two sequential reactions in the de novo biosynthetic pathway for UDP-N-acetylglucosamine (UDP-GlcNAc). The C-terminal domain catalyzes the transfer of acetyl group from acetyl coenzyme A to glucosamine-1-phosphate (GlcN-1-P) to produce N-acetylglucosamine-1-phosphate (GlcNAc-1-P), which is converted into UDP-GlcNAc by the transfer of uridine 5-monophosphate (from uridine 5-triphosphate), a reaction catalyzed by the N-terminal domain. In Pelobacter propionicus (strain DSM 2379 / NBRC 103807 / OttBd1), this protein is Bifunctional protein GlmU.